We begin with the raw amino-acid sequence, 492 residues long: MSLREKTISGAKWSAIATVIIIGLGLVQMTVLARIIDNHQFGLLTVSLVIIALADTLSDFGIANSIIQRKEISHLELTTLYWLNVGLGIVVCVAVFLLSDLIGDVLNNPDLAPLIKTLSLAFVVIPHGQQFRALMQKELEFNKIGMIETSAVLAGFTCTVVSAHFWPLAMTAILGYLVNSAVRTLLFGYFGRKIYRPGLHFSLASVAPNLRFGAWLTADSIINYLNTNLSTLVLARILGAGVAGGYNLAYNVAVVPPMKLNPIITRVLFPAFAKIQDDTEKLRVNFYKLLSVVGIINFPALLGLMVVSNNFVPLVFGEKWNSIIPVLQLLCVVGLLRSVGNPIGSLLMAKARVDISFKFNVFKTFLFIPAIVIGGQMAGAIGVTLGFLLVQIINTILSYFVMIKPVLGSSYRQYILSLWLPFYLSLPTLVVSYALGIVLKGQLALGMLLAVQIATGVLAFVVMIVLSRHPLVVEVKRQFCRSEKMKMLLRAG.

The Cytoplasmic portion of the chain corresponds to 1 to 12 (MSLREKTISGAK). The chain crosses the membrane as a helical span at residues 13–33 (WSAIATVIIIGLGLVQMTVLA). Residues 34-42 (RIIDNHQFG) lie on the Periplasmic side of the membrane. A helical membrane pass occupies residues 43–63 (LLTVSLVIIALADTLSDFGIA). Over 64–81 (NSIIQRKEISHLELTTLY) the chain is Cytoplasmic. Residues 82-102 (WLNVGLGIVVCVAVFLLSDLI) traverse the membrane as a helical segment. Over 103–104 (GD) the chain is Periplasmic. Residues 105–125 (VLNNPDLAPLIKTLSLAFVVI) traverse the membrane as a helical segment. At 126 to 157 (PHGQQFRALMQKELEFNKIGMIETSAVLAGFT) the chain is on the cytoplasmic side. A helical membrane pass occupies residues 158 to 178 (CTVVSAHFWPLAMTAILGYLV). Residues 179-236 (NSAVRTLLFGYFGRKIYRPGLHFSLASVAPNLRFGAWLTADSIINYLNTNLSTLVLAR) are Periplasmic-facing. A helical transmembrane segment spans residues 237–257 (ILGAGVAGGYNLAYNVAVVPP). Over 258–288 (MKLNPIITRVLFPAFAKIQDDTEKLRVNFYK) the chain is Cytoplasmic. Residues 289 to 309 (LLSVVGIINFPALLGLMVVSN) form a helical membrane-spanning segment. Residues 310 to 322 (NFVPLVFGEKWNS) lie on the Periplasmic side of the membrane. The chain crosses the membrane as a helical span at residues 323–343 (IIPVLQLLCVVGLLRSVGNPI). Over 344–364 (GSLLMAKARVDISFKFNVFKT) the chain is Cytoplasmic. The helical transmembrane segment at 365–385 (FLFIPAIVIGGQMAGAIGVTL) threads the bilayer. A topological domain (periplasmic) is located at residue Gly386. Residues 387–407 (FLLVQIINTILSYFVMIKPVL) traverse the membrane as a helical segment. Over 408 to 417 (GSSYRQYILS) the chain is Cytoplasmic. Residues 418–438 (LWLPFYLSLPTLVVSYALGIV) form a helical membrane-spanning segment. The Periplasmic segment spans residues 439 to 445 (LKGQLAL). Residues 446 to 466 (GMLLAVQIATGVLAFVVMIVL) traverse the membrane as a helical segment. Residues 467-492 (SRHPLVVEVKRQFCRSEKMKMLLRAG) lie on the Cytoplasmic side of the membrane.

This sequence belongs to the polysaccharide synthase family.

It is found in the cell inner membrane. It functions in the pathway bacterial outer membrane biogenesis; lipopolysaccharide biosynthesis. This is Lipopolysaccharide biosynthesis protein WzxC (wzxC) from Escherichia coli (strain K12).